Reading from the N-terminus, the 275-residue chain is Shikimate dehydrogenase (NADP(+)) (275 aa).

Residues 15-17 and T62 contribute to the shikimate site; that span reads SKS. The active-site Proton acceptor is the K66. Residue E78 coordinates NADP(+). Shikimate contacts are provided by N87 and D102. NADP(+) contacts are provided by residues 127–131, 151–156, and M215; these read GAGGA and NRTPQK. Position 217 (Y217) interacts with shikimate. G239 serves as a coordination point for NADP(+).

It belongs to the shikimate dehydrogenase family. As to quaternary structure, homodimer.

It catalyses the reaction shikimate + NADP(+) = 3-dehydroshikimate + NADPH + H(+). Its pathway is metabolic intermediate biosynthesis; chorismate biosynthesis; chorismate from D-erythrose 4-phosphate and phosphoenolpyruvate: step 4/7. In terms of biological role, involved in the biosynthesis of the chorismate, which leads to the biosynthesis of aromatic amino acids. Catalyzes the reversible NADPH linked reduction of 3-dehydroshikimate (DHSA) to yield shikimate (SA). This Nitrosospira multiformis (strain ATCC 25196 / NCIMB 11849 / C 71) protein is Shikimate dehydrogenase (NADP(+)).